A 91-amino-acid polypeptide reads, in one-letter code: MSFLNGLFGRKRDSSAELAKQRLLTVLIDDRYKLTPEMMAQMKADLAEVLKRYLPAIDAEQIEVTLSRGEAHDLLKADVPLRRATDHPPNR.

The protein belongs to the MinE family.

Prevents the cell division inhibition by proteins MinC and MinD at internal division sites while permitting inhibition at polar sites. This ensures cell division at the proper site by restricting the formation of a division septum at the midpoint of the long axis of the cell. The protein is Cell division topological specificity factor of Chloroflexus aurantiacus (strain ATCC 29366 / DSM 635 / J-10-fl).